The primary structure comprises 60 residues: Large ribosomal subunit protein uL30 (60 aa).

The protein belongs to the universal ribosomal protein uL30 family. Part of the 50S ribosomal subunit.

The sequence is that of Large ribosomal subunit protein uL30 from Thermus thermophilus (strain ATCC BAA-163 / DSM 7039 / HB27).